The sequence spans 116 residues: UPF0482 protein ECA2253 (116 aa).

The N-terminal stretch at 1-31 is a signal peptide; it reads MNHYSFSSLIRALIPLSLVIVSAVWQPAALA.

Belongs to the UPF0482 family.

The sequence is that of UPF0482 protein ECA2253 from Pectobacterium atrosepticum (strain SCRI 1043 / ATCC BAA-672) (Erwinia carotovora subsp. atroseptica).